Consider the following 1573-residue polypeptide: Pentafunctional AROM polypeptide (1573 aa).

The tract at residues Met1–Asp384 is 3-dehydroquinate synthase. NAD(+) contacts are provided by residues Asp46–Asn48, Glu83–Lys86, Gly114–Val116, and Asp119. Arg130 serves as a coordination point for 7-phospho-2-dehydro-3-deoxy-D-arabino-heptonate. Thr139–Thr140 contributes to the NAD(+) binding site. Positions 146 and 152 each coordinate 7-phospho-2-dehydro-3-deoxy-D-arabino-heptonate. Lys161 provides a ligand contact to NAD(+). Asn162 lines the 7-phospho-2-dehydro-3-deoxy-D-arabino-heptonate pocket. NAD(+) is bound by residues Phe179–Thr182 and Asn190. Glu194 contributes to the Zn(2+) binding site. Residues Glu194–Lys197 and Lys250 contribute to the 7-phospho-2-dehydro-3-deoxy-D-arabino-heptonate site. The Proton acceptor; for 3-dehydroquinate synthase activity role is filled by Glu260. 7-phospho-2-dehydro-3-deoxy-D-arabino-heptonate contacts are provided by residues Arg264–Asn268 and His271. Position 271 (His271) interacts with Zn(2+). The active-site Proton acceptor; for 3-dehydroquinate synthase activity is the His275. The 7-phospho-2-dehydro-3-deoxy-D-arabino-heptonate site is built by His287 and Lys356. Residue His287 participates in Zn(2+) binding. The interval Val397–Val843 is EPSP synthase. Cys825 functions as the For EPSP synthase activity in the catalytic mechanism. The interval Asn863–Thr1058 is shikimate kinase. Gly870–Thr877 contributes to the ATP binding site. The 3-dehydroquinase stretch occupies residues Leu1059 to Gln1280. His1182 serves as the catalytic Proton acceptor; for 3-dehydroquinate dehydratase activity. Catalysis depends on Lys1211, which acts as the Schiff-base intermediate with substrate; for 3-dehydroquinate dehydratase activity. Positions Pro1293–Glu1573 are shikimate dehydrogenase.

This sequence in the N-terminal section; belongs to the sugar phosphate cyclases superfamily. Dehydroquinate synthase family. In the 2nd section; belongs to the EPSP synthase family. It in the 3rd section; belongs to the shikimate kinase family. The protein in the 4th section; belongs to the type-I 3-dehydroquinase family. This sequence in the C-terminal section; belongs to the shikimate dehydrogenase family. As to quaternary structure, homodimer. Zn(2+) is required as a cofactor.

It localises to the cytoplasm. The enzyme catalyses 7-phospho-2-dehydro-3-deoxy-D-arabino-heptonate = 3-dehydroquinate + phosphate. The catalysed reaction is 3-dehydroquinate = 3-dehydroshikimate + H2O. It catalyses the reaction shikimate + NADP(+) = 3-dehydroshikimate + NADPH + H(+). It carries out the reaction shikimate + ATP = 3-phosphoshikimate + ADP + H(+). The enzyme catalyses 3-phosphoshikimate + phosphoenolpyruvate = 5-O-(1-carboxyvinyl)-3-phosphoshikimate + phosphate. It functions in the pathway metabolic intermediate biosynthesis; chorismate biosynthesis; chorismate from D-erythrose 4-phosphate and phosphoenolpyruvate: step 2/7. It participates in metabolic intermediate biosynthesis; chorismate biosynthesis; chorismate from D-erythrose 4-phosphate and phosphoenolpyruvate: step 3/7. The protein operates within metabolic intermediate biosynthesis; chorismate biosynthesis; chorismate from D-erythrose 4-phosphate and phosphoenolpyruvate: step 4/7. Its pathway is metabolic intermediate biosynthesis; chorismate biosynthesis; chorismate from D-erythrose 4-phosphate and phosphoenolpyruvate: step 5/7. It functions in the pathway metabolic intermediate biosynthesis; chorismate biosynthesis; chorismate from D-erythrose 4-phosphate and phosphoenolpyruvate: step 6/7. The AROM polypeptide catalyzes 5 consecutive enzymatic reactions in prechorismate polyaromatic amino acid biosynthesis. This Schizosaccharomyces pombe (strain 972 / ATCC 24843) (Fission yeast) protein is Pentafunctional AROM polypeptide.